Consider the following 956-residue polypeptide: Isoleucine--tRNA ligase (956 aa).

The 'HIGH' region motif lies at 60-70; that stretch reads PYANGHIHVGH. Glu583 provides a ligand contact to L-isoleucyl-5'-AMP. The 'KMSKS' region signature appears at 624–628; that stretch reads KMSKS. Lys627 contacts ATP. Positions 921, 924, 938, and 941 each coordinate Zn(2+).

It belongs to the class-I aminoacyl-tRNA synthetase family. IleS type 1 subfamily. As to quaternary structure, monomer. Zn(2+) serves as cofactor.

The protein localises to the cytoplasm. It carries out the reaction tRNA(Ile) + L-isoleucine + ATP = L-isoleucyl-tRNA(Ile) + AMP + diphosphate. In terms of biological role, catalyzes the attachment of isoleucine to tRNA(Ile). As IleRS can inadvertently accommodate and process structurally similar amino acids such as valine, to avoid such errors it has two additional distinct tRNA(Ile)-dependent editing activities. One activity is designated as 'pretransfer' editing and involves the hydrolysis of activated Val-AMP. The other activity is designated 'posttransfer' editing and involves deacylation of mischarged Val-tRNA(Ile). This chain is Isoleucine--tRNA ligase, found in Aquifex aeolicus (strain VF5).